The chain runs to 78 residues: Large ribosomal subunit protein bL28 (78 aa).

Positions 1–25 (MSRVCQVTGKRPAVGNNRSHARNAT) are disordered.

The protein belongs to the bacterial ribosomal protein bL28 family.

This is Large ribosomal subunit protein bL28 from Vibrio vulnificus (strain CMCP6).